Consider the following 1277-residue polypeptide: NPC intracellular cholesterol transporter 1 (1277 aa).

The first 22 residues, 1–22 (MSARGPAFGLLLLLLCPVQVFS), serve as a signal peptide directing secretion. Residues 23–269 (QSCVWYGECG…WRILGLDAMY (247 aa)) are Lumenal-facing. Intrachain disulfides connect C25-C74, C31-C42, C63-C109, C75-C113, C97-C238, C100-C160, C177-C184, C227-C243, and C240-C247. N41 contributes to the cholesterol binding site. An N-linked (GlcNAc...) asparagine glycan is attached at N70. Q79 serves as a coordination point for cholesterol. 2 N-linked (GlcNAc...) asparagine glycosylation sites follow: N122 and N135. Residues 175 to 205 (LLCGREAQACNATNWIEYMFNKDNGQAPFTI) form an important for cholesterol binding and cholesterol transfer from NPC1 to liposomes region. N-linked (GlcNAc...) asparagine glycans are attached at residues N185 and N222. Residues 270-290 (VIMWSSYMAFLIVFFGAFFAV) traverse the membrane as a helical segment. Topologically, residues 291–350 (WCYRKRYFVSEYTPIDGNIAFSVNSSDKGQAFCCDPLGAAFERGLRRLFAQWGAFCVRHP) are cytoplasmic. The chain crosses the membrane as a helical span at residues 351 to 371 (GCVVFFSLAFIVACSSGLVFI). Residues 372-621 (RVTTDPVDLW…ELNRESNSDL (250 aa)) are Lumenal-facing. N-linked (GlcNAc...) asparagine glycosylation is found at N415, N452, N459, and N478. 2 cysteine pairs are disulfide-bonded: C468/C479 and C516/C533. An SSD domain is found at 620–785 (DLFTILISYA…ITCFVSLLGL (166 aa)). The helical transmembrane segment at 622–642 (FTILISYAIMFLYISIALGHI) threads the bilayer. Residues 643–653 (KSCSRLLVDSK) are Cytoplasmic-facing. Residues 654-674 (ISLGIAGILIVLSSVACSLGI) traverse the membrane as a helical segment. The Lumenal portion of the chain corresponds to 675–677 (FSY). Residues 678–698 (IGVPLTLIVIEVIPFLVLAVG) form a helical membrane-spanning segment. Over 699-734 (VDNIFILVQTYQRDERLQGETLDQQLGRVLGEVAPS) the chain is Cytoplasmic. Residues 735–755 (MFLSSFSETVAFFLGGLSVVP) traverse the membrane as a helical segment. Over 756 to 759 (AVHT) the chain is Lumenal. The chain crosses the membrane as a helical span at residues 760–780 (FSLFAGMAVLIDFLLQITCFV). At 781-832 (SLLGLDIKRQEKNRLDVVCCVQGAEDGAGVQASESCLFRFFKNSYAPLLLKD) the chain is on the cytoplasmic side. A helical transmembrane segment spans residues 833–853 (WMRPIVIAVFVGVLSFSIAVL). Over 854–1097 (NKVEIGLDQS…EQYLTVIDDT (244 aa)) the chain is Lumenal. The N-linked (GlcNAc...) asparagine glycan is linked to N898. C909 and C914 are joined by a disulfide. N-linked (GlcNAc...) asparagine glycans are attached at residues N916, N931, N961, N968, N1028, and N1063. 3 cysteine pairs are disulfide-bonded: C956–C1011, C957–C979, and C967–C976. A helical membrane pass occupies residues 1098-1118 (IFNLGVSLGAIFLVTVVLMGC). Residues 1119-1123 (ELWAT) lie on the Cytoplasmic side of the membrane. Residues 1124–1144 (VIMCVTIAMILVNMFGVMWLW) traverse the membrane as a helical segment. A topological domain (lumenal) is located at residue G1145. A helical transmembrane segment spans residues 1146-1166 (ISLNAVSLVNLVMSCGISVEF). Over 1167–1194 (CSHITRAFTLSTKGSRVDRAEEALAHMG) the chain is Cytoplasmic. Residues 1195–1215 (SSVFSGITLTKFGGIVVLAFA) form a helical membrane-spanning segment. Topologically, residues 1216 to 1226 (KSQIFQIFYFR) are lumenal. A helical membrane pass occupies residues 1227–1247 (MYLAIVLLGATHGLIFLPVLL). The Cytoplasmic portion of the chain corresponds to 1248 to 1277 (SYIGPSINKAKSLATQERYKGTEREQLLNF). The required for location in lysosomes stretch occupies residues 1274 to 1277 (LLNF). Residues 1274 to 1277 (LLNF) carry the Di-leucine motif motif.

This sequence belongs to the patched family. Interacts (via the second lumenal domain) with NPC2. Interacts with TMEM97; the interaction may decrease NPC1 availability to the cell. Interacts with TIM1. Interacts with SLC38A9; this interaction inhibits cholesterol-mediated mTORC1 activation via its sterol transport activity. In terms of processing, N-glycosylated. In terms of tissue distribution, detected in corpus luteum, granulosa cells and adrenal gland.

The protein localises to the late endosome membrane. It localises to the lysosome membrane. It catalyses the reaction cholesterol(in) = cholesterol(out). In terms of biological role, intracellular cholesterol transporter which acts in concert with NPC2 and plays an important role in the egress of cholesterol from the endosomal/lysosomal compartment. Unesterified cholesterol that has been released from LDLs in the lumen of the late endosomes/lysosomes is transferred by NPC2 to the cholesterol-binding pocket in the N-terminal domain of NPC1. Cholesterol binds to NPC1 with the hydroxyl group buried in the binding pocket. Binds oxysterol with higher affinity than cholesterol. May play a role in vesicular trafficking in glia, a process that may be crucial for maintaining the structural and functional integrity of nerve terminals. Inhibits cholesterol-mediated mTORC1 activation throught its interaction with SLC38A9. This is NPC intracellular cholesterol transporter 1 from Sus scrofa (Pig).